The chain runs to 385 residues: Phospho-N-acetylmuramoyl-pentapeptide-transferase (385 aa).

The next 10 membrane-spanning stretches (helical) occupy residues 23 to 43 (FITV…LGAG), 79 to 99 (MGGI…GAVA), 103 to 123 (VWLS…DDYV), 135 to 155 (AWYK…VLYF), 186 to 206 (LGVD…VTAV), 218 to 238 (GLTT…VYVS), 258 to 278 (LTVF…YNGY), 282 to 302 (VFMG…TILM), 307 to 327 (LLLP…IVQT), and 362 to 382 (KIVT…LLIL).

Belongs to the glycosyltransferase 4 family. MraY subfamily. It depends on Mg(2+) as a cofactor.

The protein localises to the cell inner membrane. It carries out the reaction UDP-N-acetyl-alpha-D-muramoyl-L-alanyl-gamma-D-glutamyl-meso-2,6-diaminopimeloyl-D-alanyl-D-alanine + di-trans,octa-cis-undecaprenyl phosphate = di-trans,octa-cis-undecaprenyl diphospho-N-acetyl-alpha-D-muramoyl-L-alanyl-D-glutamyl-meso-2,6-diaminopimeloyl-D-alanyl-D-alanine + UMP. The protein operates within cell wall biogenesis; peptidoglycan biosynthesis. Its function is as follows. Catalyzes the initial step of the lipid cycle reactions in the biosynthesis of the cell wall peptidoglycan: transfers peptidoglycan precursor phospho-MurNAc-pentapeptide from UDP-MurNAc-pentapeptide onto the lipid carrier undecaprenyl phosphate, yielding undecaprenyl-pyrophosphoryl-MurNAc-pentapeptide, known as lipid I. The chain is Phospho-N-acetylmuramoyl-pentapeptide-transferase from Salinibacter ruber (strain DSM 13855 / M31).